Here is a 191-residue protein sequence, read N- to C-terminus: Elongation factor P (191 aa).

This sequence belongs to the elongation factor P family.

The protein resides in the cytoplasm. The protein operates within protein biosynthesis; polypeptide chain elongation. Involved in peptide bond synthesis. Stimulates efficient translation and peptide-bond synthesis on native or reconstituted 70S ribosomes in vitro. Probably functions indirectly by altering the affinity of the ribosome for aminoacyl-tRNA, thus increasing their reactivity as acceptors for peptidyl transferase. This Bartonella tribocorum (strain CIP 105476 / IBS 506) protein is Elongation factor P.